Reading from the N-terminus, the 231-residue chain is Octanoyltransferase (231 aa).

The region spanning 29 to 231 (PQDPDLLWLC…GRQLCIWLAP (203 aa)) is the BPL/LPL catalytic domain. Substrate-binding positions include 68–75 (RGGQVTFH), 164–166 (ALG), and 177–179 (GVA). The Acyl-thioester intermediate role is filled by Cys-195.

This sequence belongs to the LipB family.

The protein resides in the cytoplasm. It carries out the reaction octanoyl-[ACP] + L-lysyl-[protein] = N(6)-octanoyl-L-lysyl-[protein] + holo-[ACP] + H(+). Its pathway is protein modification; protein lipoylation via endogenous pathway; protein N(6)-(lipoyl)lysine from octanoyl-[acyl-carrier-protein]: step 1/2. Its function is as follows. Catalyzes the transfer of endogenously produced octanoic acid from octanoyl-acyl-carrier-protein onto the lipoyl domains of lipoate-dependent enzymes. Lipoyl-ACP can also act as a substrate although octanoyl-ACP is likely to be the physiological substrate. This Verminephrobacter eiseniae (strain EF01-2) protein is Octanoyltransferase.